The following is a 430-amino-acid chain: Enolase (430 aa).

Q167 contacts (2R)-2-phosphoglycerate. The active-site Proton donor is E209. Residues D246, E287, and D314 each contribute to the Mg(2+) site. Residues K339, R368, S369, and K390 each contribute to the (2R)-2-phosphoglycerate site. K339 acts as the Proton acceptor in catalysis.

Belongs to the enolase family. The cofactor is Mg(2+).

The protein localises to the cytoplasm. It localises to the secreted. Its subcellular location is the cell surface. The catalysed reaction is (2R)-2-phosphoglycerate = phosphoenolpyruvate + H2O. Its pathway is carbohydrate degradation; glycolysis; pyruvate from D-glyceraldehyde 3-phosphate: step 4/5. Functionally, catalyzes the reversible conversion of 2-phosphoglycerate (2-PG) into phosphoenolpyruvate (PEP). It is essential for the degradation of carbohydrates via glycolysis. The chain is Enolase from Prochlorococcus marinus (strain MIT 9312).